A 632-amino-acid polypeptide reads, in one-letter code: Basic helix-loop-helix ARNT-like protein 1 (632 aa).

Residues 1-39 form a disordered region; that stretch reads MADQRMDISSTISDFMSPGPTDLLSGSLGTSGVDCNRKR. At serine 17 the chain carries Phosphoserine; by GSK3-beta. Threonine 21 carries the phosphothreonine; by GSK3-beta modification. The Nuclear localization signal signature appears at 36 to 41; it reads NRKRKG. Residues 79–132 enclose the bHLH domain; that stretch reads NAREAHSQIEKRRRDKMNSFIDELASLVPTCNAMSRKLDKLTVLRMAVQHMKTL. The residue at position 85 (serine 85) is a Phosphoserine. At serine 97 the chain carries Phosphoserine; by CK2. Positions 149-159 match the Nuclear export signal 1 motif; sequence LSDDELKHLIL. A PAS 1 domain is found at 150–222; it reads SDDELKHLIL…EQLSSSDTAP (73 aa). Lysine 259 participates in a covalent cross-link: Glycyl lysine isopeptide (Lys-Gly) (interchain with G-Cter in SUMO2 and SUMO3). Lysine 266 participates in a covalent cross-link: Glycyl lysine isopeptide (Lys-Gly) (interchain with G-Cter in SUMO); alternate. Residue lysine 266 forms a Glycyl lysine isopeptide (Lys-Gly) (interchain with G-Cter in SUMO2); alternate linkage. The PAS 2 domain maps to 333–403; that stretch reads QPANGEIRVK…CHRQVLQTRE (71 aa). Residues 367-375 carry the Nuclear export signal 2 motif; sequence LAYLPQELL. The 44-residue stretch at 408–451 folds into the PAC domain; sequence NCYKFKIKDGSFITLRSRWFSFMNPWTKEVEYIVSTNTVVLANV. Disordered stretches follow at residues 465–498 and 517–601; these read PPHS…RAGA and GSSP…SPSN. Positions 514–594 are interaction with CIART; the sequence is RIRGSSPSSC…IGIDMIDNDQ (81 aa). The segment covering 517 to 527 has biased composition (low complexity); the sequence is GSSPSSCGSSP. N6-acetyllysine is present on lysine 544.

Component of the circadian clock oscillator which includes the CRY1/2 proteins, CLOCK or NPAS2, BMAL1 or BMAL2, CSNK1D and/or CSNK1E, TIMELESS and the PER1/2/3 proteins. Forms a heterodimer with CLOCK. The CLOCK-BMAL1 heterodimer is required for E-box-dependent transactivation, for CLOCK nuclear translocation and degradation, and, for phosphorylation of both CLOCK and BMAL1. Part of a nuclear complex which also includes RACK1 and PRKCA; RACK1 and PRKCA are recruited to the complex in a circadian manner. Interacts with NPAS2. Interacts with EZH2. Interacts with SUMO3. Interacts with SIRT1. Interacts with AHR. Interacts with ID1, ID2 and ID3. Interacts with DDX4. Interacts with OGT. Interacts with EED and SUZ12. Interacts with MTA1. Interacts with CIART. Interacts with HSP90. Interacts with KAT2B and EP300. Interacts with BHLHE40/DEC1 and BHLHE41/DEC2. Interacts with RELB and the interaction is enhanced in the presence of CLOCK. Interacts with PER1, PER2, CRY1 and CRY2 and this interaction requires a translocation to the nucleus. Interaction of the CLOCK-BMAL1 heterodimer with PER or CRY inhibits transcription activation. Interaction of the CLOCK-BMAL1 with CRY1 is independent of DNA but with PER2 is off DNA. The CLOCK-BMAL1 heterodimer interacts with GSK3B. Interacts with KDM5A. Interacts with KMT2A; in a circadian manner. Interacts with UBE3A. Interacts with PRKCG. Interacts with MAGEL2. Interacts with NCOA2. Interacts with THRAP3. The CLOCK-BMAL1 heterodimer interacts with PASD1. Interacts with PASD1. Interacts with USP9X. Interacts with PIWIL2 (via PIWI domain). Interacts with HDAC3. Interacts with HNF4A. Ubiquitinated, leading to its proteasomal degradation. Deubiquitinated by USP9X. In terms of processing, O-glycosylated; contains O-GlcNAc. O-glycosylation by OGT prevents protein degradation by inhibiting ubiquitination. It also stabilizes the CLOCK-BMAL1 heterodimer thereby increasing CLOCK-BMAL1-mediated transcription of genes in the negative loop of the circadian clock such as PER1/2/3 and CRY1/2. Post-translationally, acetylated on Lys-544 by CLOCK during the repression phase of the circadian cycle. Acetylation facilitates recruitment of CRY1 protein and initiates the repression phase of the circadian cycle. Acetylated at Lys-544 by KAT5 during the activation phase of the cycle, leading to recruitment of the positive transcription elongation factor b (P-TEFb) and BRD4, followed by productive elongation of circadian transcripts. Deacetylated by SIRT1, which may result in decreased protein stability. Phosphorylated upon dimerization with CLOCK. Phosphorylation enhances the transcriptional activity, alters the subcellular localization and decreases the stability of the CLOCK-BMAL1 heterodimer by promoting its degradation. Phosphorylation shows circadian variations in the liver with a peak between CT10 to CT14. Phosphorylation at Ser-97 by CK2 is essential for its nuclear localization, its interaction with CLOCK and controls CLOCK nuclear entry. Dephosphorylation at Ser-85 is important for dimerization with CLOCK and transcriptional activity. In terms of processing, sumoylated on Lys-266 upon dimerization with CLOCK. Predominantly conjugated to poly-SUMO2/3 rather than SUMO1 and the level of these conjugates undergo rhythmic variation, peaking at CT9-CT12. Sumoylation localizes it exclusively to the PML body and promotes its ubiquitination in the PML body, ubiquitin-dependent proteasomal degradation and the transcriptional activity of the CLOCK-BMAL1 heterodimer. Post-translationally, undergoes lysosome-mediated degradation in a time-dependent manner in the liver. In terms of tissue distribution, expressed in liver and testis (at protein level). Expressed in the suprachiasmatic nucleus (SCN) in a circadian manner.

The protein resides in the nucleus. It is found in the cytoplasm. The protein localises to the PML body. With respect to regulation, the redox state of the cell can modulate the transcriptional activity of the CLOCK-BMAL1 and NPAS2-BMAL1 heterodimers; NADH and NADPH enhance the DNA-binding activity of the heterodimers. Transcriptional activator which forms a core component of the circadian clock. The circadian clock, an internal time-keeping system, regulates various physiological processes through the generation of approximately 24 hour circadian rhythms in gene expression, which are translated into rhythms in metabolism and behavior. It is derived from the Latin roots 'circa' (about) and 'diem' (day) and acts as an important regulator of a wide array of physiological functions including metabolism, sleep, body temperature, blood pressure, endocrine, immune, cardiovascular, and renal function. Consists of two major components: the central clock, residing in the suprachiasmatic nucleus (SCN) of the brain, and the peripheral clocks that are present in nearly every tissue and organ system. Both the central and peripheral clocks can be reset by environmental cues, also known as Zeitgebers (German for 'timegivers'). The predominant Zeitgeber for the central clock is light, which is sensed by retina and signals directly to the SCN. The central clock entrains the peripheral clocks through neuronal and hormonal signals, body temperature and feeding-related cues, aligning all clocks with the external light/dark cycle. Circadian rhythms allow an organism to achieve temporal homeostasis with its environment at the molecular level by regulating gene expression to create a peak of protein expression once every 24 hours to control when a particular physiological process is most active with respect to the solar day. Transcription and translation of core clock components (CLOCK, NPAS2, BMAL1, BMAL2, PER1, PER2, PER3, CRY1 and CRY2) plays a critical role in rhythm generation, whereas delays imposed by post-translational modifications (PTMs) are important for determining the period (tau) of the rhythms (tau refers to the period of a rhythm and is the length, in time, of one complete cycle). A diurnal rhythm is synchronized with the day/night cycle, while the ultradian and infradian rhythms have a period shorter and longer than 24 hours, respectively. Disruptions in the circadian rhythms contribute to the pathology of cardiovascular diseases, cancer, metabolic syndromes and aging. A transcription/translation feedback loop (TTFL) forms the core of the molecular circadian clock mechanism. Transcription factors, CLOCK or NPAS2 and BMAL1 or BMAL2, form the positive limb of the feedback loop, act in the form of a heterodimer and activate the transcription of core clock genes and clock-controlled genes (involved in key metabolic processes), harboring E-box elements (5'-CACGTG-3') within their promoters. The core clock genes: PER1/2/3 and CRY1/2 which are transcriptional repressors form the negative limb of the feedback loop and interact with the CLOCK|NPAS2-BMAL1|BMAL2 heterodimer inhibiting its activity and thereby negatively regulating their own expression. This heterodimer also activates nuclear receptors NR1D1/2 and RORA/B/G, which form a second feedback loop and which activate and repress BMAL1 transcription, respectively. BMAL1 positively regulates myogenesis and negatively regulates adipogenesis via the transcriptional control of the genes of the canonical Wnt signaling pathway. Plays a role in normal pancreatic beta-cell function; regulates glucose-stimulated insulin secretion via the regulation of antioxidant genes NFE2L2/NRF2 and its targets SESN2, PRDX3, CCLC and CCLM. Negatively regulates the mTORC1 signaling pathway; regulates the expression of MTOR and DEPTOR. Controls diurnal oscillations of Ly6C inflammatory monocytes; rhythmic recruitment of the PRC2 complex imparts diurnal variation to chemokine expression that is necessary to sustain Ly6C monocyte rhythms. Regulates the expression of HSD3B2, STAR, PTGS2, CYP11A1, CYP19A1 and LHCGR in the ovary and also the genes involved in hair growth. Plays an important role in adult hippocampal neurogenesis by regulating the timely entry of neural stem/progenitor cells (NSPCs) into the cell cycle and the number of cell divisions that take place prior to cell-cycle exit. Regulates the circadian expression of CIART and KLF11. The CLOCK-BMAL1 heterodimer regulates the circadian expression of SERPINE1/PAI1, VWF, B3, CCRN4L/NOC, NAMPT, DBP, MYOD1, PPARGC1A, PPARGC1B, SIRT1, GYS2, F7, NGFR, GNRHR, BHLHE40/DEC1, ATF4, MTA1, KLF10 and also genes implicated in glucose and lipid metabolism. Promotes rhythmic chromatin opening, regulating the DNA accessibility of other transcription factors. May play a role in spermatogenesis; contributes to the chromatoid body assembly and physiology. The NPAS2-BMAL1 heterodimer positively regulates the expression of MAOA, F7 and LDHA and modulates the circadian rhythm of daytime contrast sensitivity by regulating the rhythmic expression of adenylate cyclase type 1 (ADCY1) in the retina. The preferred binding motif for the CLOCK-BMAL1 heterodimer is 5'-CACGTGA-3', which contains a flanking adenine nucleotide at the 3-prime end of the canonical 6-nucleotide E-box sequence. CLOCK specifically binds to the half-site 5'-CAC-3', while BMAL1 binds to the half-site 5'-GTGA-3'. The CLOCK-BMAL1 heterodimer also recognizes the non-canonical E-box motifs 5'-AACGTGA-3' and 5'-CATGTGA-3'. Essential for the rhythmic interaction of CLOCK with ASS1 and plays a critical role in positively regulating CLOCK-mediated acetylation of ASS1. Plays a role in protecting against lethal sepsis by limiting the expression of immune checkpoint protein CD274 in macrophages in a PKM2-dependent manner. Regulates the diurnal rhythms of skeletal muscle metabolism via transcriptional activation of genes promoting triglyceride synthesis (DGAT2) and metabolic efficiency (COQ10B). The chain is Basic helix-loop-helix ARNT-like protein 1 (Bmal1) from Mus musculus (Mouse).